The primary structure comprises 129 residues: NADH-quinone oxidoreductase subunit 15 (129 aa).

The protein belongs to the complex I Nqo15 family. In terms of assembly, NDH-1 is composed of 15 different subunits, Nqo1 to Nqo15. The complex has a L-shaped structure, with the hydrophobic arm (subunits Nqo7, Nqo8 and Nqo10 to Nqo14) embedded in the membrane and the hydrophilic peripheral arm (subunits Nqo1 to Nqo6, Nqo9 and Nqo15) protruding into the bacterial cytoplasm. The hydrophilic domain contains all the redox centers. Nqo15 is bound to the side of the complex near the N-terminus of Nqo3, where it interacts with subunits Nqo3, Nqo2, Nqo1, Nqo9 and Nqo4.

The protein resides in the cell membrane. It carries out the reaction a quinone + NADH + 5 H(+)(in) = a quinol + NAD(+) + 4 H(+)(out). Its function is as follows. NDH-1 shuttles electrons from NADH, via FMN and iron-sulfur (Fe-S) centers, to quinones in the respiratory chain. The immediate electron acceptor for the enzyme in this species is menaquinone. Couples the redox reaction to proton translocation (for every two electrons transferred, four hydrogen ions are translocated across the cytoplasmic membrane), and thus conserves the redox energy in a proton gradient required for the synthesis of ATP. The Nqo15 subunit has probably a role in complex stabilization, and may be also involved in the storage of iron for iron-sulfur cluster regeneration in the complex. In Thermus thermophilus (strain ATCC 27634 / DSM 579 / HB8), this protein is NADH-quinone oxidoreductase subunit 15 (nqo15).